A 63-amino-acid chain; its full sequence is Large ribosomal subunit protein bL28 (63 aa).

This sequence belongs to the bacterial ribosomal protein bL28 family.

The protein is Large ribosomal subunit protein bL28 of Beutenbergia cavernae (strain ATCC BAA-8 / DSM 12333 / CCUG 43141 / JCM 11478 / NBRC 16432 / NCIMB 13614 / HKI 0122).